The sequence spans 364 residues: MQDRQKAQDYRALLLADTPLIDVRAPIEFEQGAMPGAINLPLMMDNERAAVGTCYKRQGADAALALGHRLVCGDIRQQRLEAWKAAYQRFPNGYLCCARGGQRSHIVQRWLQETGIDCPLIEGGYKALRQTAIQATWQLAQKPILLIGGCTGSGKTQLVRQQPNGVDLEGLARHRGSSFGRTLNPQLSQASFENKLAVELLKINAHQTLKRWVLEDEGRTIGANHLPECLRERMAQAPIAVVEDPFALRLERLREEYFIRMHHDFTHAYGDEAGWQAYSEYLHHGLFAIRRRLGLQRFAELTDTLDRALAEQLSNGSTDGHMAWLVPLLNEYYDPMYRYQLEKKAANIVFRGPWQDVANWLKAQ.

The Rhodanese domain occupies 14–137 (LLADTPLIDV…LRQTAIQATW (124 aa)). Cys-97 (S-selanylcysteine intermediate) is an active-site residue.

The protein belongs to the SelU family. In terms of assembly, monomer.

The catalysed reaction is 5-methylaminomethyl-2-thiouridine(34) in tRNA + selenophosphate + (2E)-geranyl diphosphate + H2O + H(+) = 5-methylaminomethyl-2-selenouridine(34) in tRNA + (2E)-thiogeraniol + phosphate + diphosphate. The enzyme catalyses 5-methylaminomethyl-2-thiouridine(34) in tRNA + (2E)-geranyl diphosphate = 5-methylaminomethyl-S-(2E)-geranyl-thiouridine(34) in tRNA + diphosphate. It catalyses the reaction 5-methylaminomethyl-S-(2E)-geranyl-thiouridine(34) in tRNA + selenophosphate + H(+) = 5-methylaminomethyl-2-(Se-phospho)selenouridine(34) in tRNA + (2E)-thiogeraniol. It carries out the reaction 5-methylaminomethyl-2-(Se-phospho)selenouridine(34) in tRNA + H2O = 5-methylaminomethyl-2-selenouridine(34) in tRNA + phosphate. In terms of biological role, involved in the post-transcriptional modification of the uridine at the wobble position (U34) of tRNA(Lys), tRNA(Glu) and tRNA(Gln). Catalyzes the conversion of 2-thiouridine (S2U-RNA) to 2-selenouridine (Se2U-RNA). Acts in a two-step process involving geranylation of 2-thiouridine (S2U) to S-geranyl-2-thiouridine (geS2U) and subsequent selenation of the latter derivative to 2-selenouridine (Se2U) in the tRNA chain. The chain is tRNA 2-selenouridine synthase from Salmonella agona (strain SL483).